We begin with the raw amino-acid sequence, 144 residues long: MVPIKLKGRTISRGCAEGEILISRDPISFLGSVDPKTGIVVEEKHSLAGKSIKGKVLVFPHGKGSTVGSYVMYQLKKNGAAPVAIINLETEPIVAVGAIISEIPLVDMLEKSPYESLKDGDVVQVNGSEGYIELIKPKGSKIEE.

Serine 65 acts as the Proton acceptor in catalysis.

Belongs to the AcnX type II small subunit family. Heterodimer composed of a large subunit (PMDh-L) and a small subunit (PMDh-S).

It carries out the reaction (R)-5-phosphomevalonate = (2E)-3-methyl-5-phosphooxypent-2-enoate + H2O. It functions in the pathway isoprenoid biosynthesis; isopentenyl diphosphate biosynthesis via mevalonate pathway. Component of a hydro-lyase that catalyzes the dehydration of mevalonate 5-phosphate (MVA5P) to form trans-anhydromevalonate 5-phosphate (tAHMP). Involved in the archaeal mevalonate (MVA) pathway, which provides fundamental precursors for isoprenoid biosynthesis, such as isopentenyl diphosphate (IPP) and dimethylallyl diphosphate (DMAPP). The chain is Phosphomevalonate dehydratase small subunit from Methanosarcina acetivorans (strain ATCC 35395 / DSM 2834 / JCM 12185 / C2A).